We begin with the raw amino-acid sequence, 692 residues long: Translation initiation factor IF-2 (692 aa).

Residues 194 to 363 (PRPPIVTVMG…LLVAEMEDLK (170 aa)) form the tr-type G domain. Residues 203–210 (GHVDHGKT) form a G1 region. 203-210 (GHVDHGKT) contacts GTP. The segment at 228 to 232 (GITQH) is G2. The G3 stretch occupies residues 249–252 (DTPG). Residues 249 to 253 (DTPGH) and 303 to 306 (NKID) each bind GTP. The G4 stretch occupies residues 303–306 (NKID). The G5 stretch occupies residues 339-341 (SAK).

Belongs to the TRAFAC class translation factor GTPase superfamily. Classic translation factor GTPase family. IF-2 subfamily.

The protein localises to the cytoplasm. One of the essential components for the initiation of protein synthesis. Protects formylmethionyl-tRNA from spontaneous hydrolysis and promotes its binding to the 30S ribosomal subunits. Also involved in the hydrolysis of GTP during the formation of the 70S ribosomal complex. This chain is Translation initiation factor IF-2, found in Thermoanaerobacter sp. (strain X514).